A 413-amino-acid chain; its full sequence is Interferon-inducible GTPase 1 (413 aa).

Gly-2 carries N-myristoyl glycine lipidation. One can recognise an IRG-type G domain in the interval 68–250 (SVLNVAVTGE…PVLMDKLISD (183 aa)). GDP contacts are provided by Gly-79, Gly-81, Lys-82, Ser-83, Ser-84, Thr-102, and Gly-103. (Microbial infection) Phosphothreonine; by ROP18 is present on Thr-102. (Microbial infection) Phosphothreonine; by ROP18 is present on Thr-108. Residues Lys-184, Asp-186, Ser-187, and Asn-232 each coordinate GDP. Cys-236 and Cys-410 are oxidised to a cystine.

The protein belongs to the TRAFAC class dynamin-like GTPase superfamily. IRG family. In terms of assembly, monomer, as apoenzyme and in the GDP-bound form. Homooligomer, upon GTP binding. Interacts with HOOK3. (Microbial infection) Interacts with Toxoplasma gondii GRA7 in GTP-dependent manner; the interaction results in faster turnover of the GTP-activated IIGP1 oligomer. Interacts with T.gondii ROP5; the interaction results in inhibition of IRGA6/IIGP1 GTPase activity and oligomerization. Post-translationally, myristoylated. In terms of processing, (Microbial infection) Phosphorylated by Toxoplasma gondii ROP18 from virulent strains.

The protein resides in the cytoplasm. It localises to the nucleus membrane. Its subcellular location is the endoplasmic reticulum membrane. It is found in the golgi apparatus. The protein localises to the golgi stack membrane. The protein resides in the parasitophorous vacuole membrane. It catalyses the reaction GTP + H2O = GDP + phosphate + H(+). In terms of biological role, GTPase with low activity. Has higher affinity for GDP than for GTP. Plays a role in resistance to intracellular pathogens. During infection with avirulent Toxoplasma gondii strains, recruited to the parasitophorous vacuole membrane. Required for disruption of the parasitophorous vacuole formed following T.gondii infection and subsequent killing of the parasite. Mediates resistance to Chlamydia trachomatis infection by targeting bacterial inclusions to autophagosomes for subsequent lysosomal destruction. This is Interferon-inducible GTPase 1 (Iigp1) from Mus musculus (Mouse).